We begin with the raw amino-acid sequence, 99 residues long: Integration host factor subunit alpha (99 aa).

It belongs to the bacterial histone-like protein family. As to quaternary structure, heterodimer of an alpha and a beta chain.

Its function is as follows. This protein is one of the two subunits of integration host factor, a specific DNA-binding protein that functions in genetic recombination as well as in transcriptional and translational control. The polypeptide is Integration host factor subunit alpha (ihfA) (Xylella fastidiosa (strain 9a5c)).